Here is a 663-residue protein sequence, read N- to C-terminus: Glucans biosynthesis glucosyltransferase H (663 aa).

6 helical membrane-spanning segments follow: residues 64 to 86 (WMLG…DTIA), 101 to 123 (LAPL…VVLM), 413 to 435 (LVIG…AGLI), 470 to 492 (AWAM…ILVL), 558 to 580 (EAWA…FWFT), and 584 to 606 (LTAT…LGAH).

This sequence belongs to the glycosyltransferase 2 family. OpgH subfamily.

The protein resides in the cell inner membrane. The protein operates within glycan metabolism; osmoregulated periplasmic glucan (OPG) biosynthesis. Involved in the biosynthesis of osmoregulated periplasmic glucans (OPGs). This chain is Glucans biosynthesis glucosyltransferase H, found in Caulobacter vibrioides (strain ATCC 19089 / CIP 103742 / CB 15) (Caulobacter crescentus).